A 102-amino-acid polypeptide reads, in one-letter code: Circadian clock protein KaiB3 (102 aa).

This sequence belongs to the KaiB family. As to quaternary structure, purifies as a monomer and homotetramer. Interacts with KaiC1 and KaiC3.

Functionally, a paralog of KaiB1, the major clock oscillator protein in this species. KaiB3 and KaiC3 may cross talk with the core oscillator. The monomer reduces the ATPase activity of KaiC3 by 55%, the homotetramer has no effect. In terms of biological role, a metamorphic protein which may reversibly switch between an inactive tetrameric fold and a rare thioredoxin-like monomeric fold (KaiB(fs)). The protein is Circadian clock protein KaiB3 of Synechocystis sp. (strain ATCC 27184 / PCC 6803 / Kazusa).